The following is a 402-amino-acid chain: Acetate kinase (402 aa).

Asn7 contributes to the Mg(2+) binding site. Residue Lys14 coordinates ATP. A substrate-binding site is contributed by Arg95. The Proton donor/acceptor role is filled by Asp152. Residues 212–216 (HLGNG), 286–288 (DMR), and 334–338 (GIGEN) each bind ATP. Residue Glu388 participates in Mg(2+) binding.

It belongs to the acetokinase family. Homodimer. The cofactor is Mg(2+). Mn(2+) is required as a cofactor.

The protein resides in the cytoplasm. It catalyses the reaction acetate + ATP = acetyl phosphate + ADP. Its pathway is metabolic intermediate biosynthesis; acetyl-CoA biosynthesis; acetyl-CoA from acetate: step 1/2. Its function is as follows. Catalyzes the formation of acetyl phosphate from acetate and ATP. Can also catalyze the reverse reaction. This is Acetate kinase from Oleidesulfovibrio alaskensis (strain ATCC BAA-1058 / DSM 17464 / G20) (Desulfovibrio alaskensis).